A 369-amino-acid polypeptide reads, in one-letter code: Putative gustatory receptor 39b (369 aa).

Residues 1–32 (MLYSFHPYLKYFALLGLVPWSESCAQSKFVQK) lie on the Cytoplasmic side of the membrane. Residues 33–53 (VYSAILIILNAVHFGISIYFP) traverse the membrane as a helical segment. The Extracellular portion of the chain corresponds to 54–59 (QSAELF). Residues 60–80 (LSLMVNVIVFVARIVCVTVII) form a helical membrane-spanning segment. At 81-122 (LQVMVHYDDYFRFCREMKYLGLRLQCELKIHVGRLKWQSYAK) the chain is on the cytoplasmic side. The chain crosses the membrane as a helical span at residues 123 to 143 (ILALGIGFLVTVLPSIYVALS). The Extracellular segment spans residues 144 to 147 (GSLL). Residues 148 to 168 (YFWSSLLSILIIRMQFVLVLL) form a helical membrane-spanning segment. At 169–224 (NVELLGHHVSLLGIRLQNVLECHLMGANCTLDGNANRLCSLEFLLALKQSHMQLHY) the chain is on the cytoplasmic side. The helical transmembrane segment at 225–245 (LFTHFNDLFGWSILGTYVVLF) threads the bilayer. The Extracellular segment spans residues 246-265 (SDSTVNIYWTQQVLVEVYEY). A helical membrane pass occupies residues 266–286 (KYLYATFSVFVPSFFNILVFC). Residues 287–348 (RCGEFCQRQS…EGFMSTDNSL (62 aa)) lie on the Cytoplasmic side of the membrane. Residues 349–368 (LMSILAAKVTYLIVLMQFSS) traverse the membrane as a helical segment. A topological domain (extracellular) is located at residue valine 369.

The protein belongs to the insect chemoreceptor superfamily. Gustatory receptor (GR) family. Gr2a subfamily. In terms of tissue distribution, expressed in the adult labellar chemosensory neurons and in abdominal ganglions. In larvae, is expressed in neurons of the dorsal and posterior pharyngeal sense organs.

The protein localises to the cell membrane. In terms of biological role, probable gustatory receptor which mediates acceptance or avoidance behavior, depending on its substrates. Has also atypical sensory function in organ not limited to conventional taste sensing like abdominal ganglions. The protein is Putative gustatory receptor 39b (Gr39b) of Drosophila melanogaster (Fruit fly).